Consider the following 1088-residue polypeptide: Ran-binding protein 17 (1088 aa).

Alanine 2 is subject to N-acetylalanine. Serine 569 bears the Phosphoserine mark.

Belongs to the exportin family. As to quaternary structure, binds to nucleoporins and the GTP-bound form of Ran. Highly expressed in primary spermatocytes and very weakly in pancreas.

It is found in the cytoplasm. The protein localises to the nucleus. The protein resides in the nuclear pore complex. Its function is as follows. May function as a nuclear transport receptor. The polypeptide is Ran-binding protein 17 (Ranbp17) (Mus musculus (Mouse)).